The chain runs to 280 residues: RAD52 motif-containing protein 1 (280 aa).

The 84-residue stretch at 18–101 folds into the RRM domain; sequence KTIFIWDIQP…SPLKVRLSTK (84 aa).

As to quaternary structure, homodimer.

Its subcellular location is the nucleus. The protein resides in the cytoplasm. It is found in the nucleolus. Functionally, may confer resistance to the antitumor agent cisplatin. Binds to DNA and RNA. In Danio rerio (Zebrafish), this protein is RAD52 motif-containing protein 1 (rdm1).